The sequence spans 552 residues: Hydroxylamine reductase (552 aa).

[2Fe-2S] cluster-binding residues include cysteine 3, cysteine 6, cysteine 18, and cysteine 25. Residues histidine 250, glutamate 274, cysteine 318, cysteine 406, cysteine 434, cysteine 459, glutamate 493, and lysine 495 each contribute to the hybrid [4Fe-2O-2S] cluster site. Cysteine 406 is subject to Cysteine persulfide.

Belongs to the HCP family. [2Fe-2S] cluster is required as a cofactor. Hybrid [4Fe-2O-2S] cluster serves as cofactor.

Its subcellular location is the cytoplasm. The catalysed reaction is A + NH4(+) + H2O = hydroxylamine + AH2 + H(+). Functionally, catalyzes the reduction of hydroxylamine to form NH(3) and H(2)O. In Shewanella sediminis (strain HAW-EB3), this protein is Hydroxylamine reductase.